We begin with the raw amino-acid sequence, 237 residues long: Sugar fermentation stimulation protein homolog (237 aa).

It belongs to the SfsA family.

This is Sugar fermentation stimulation protein homolog from Colwellia psychrerythraea (strain 34H / ATCC BAA-681) (Vibrio psychroerythus).